The chain runs to 453 residues: tRNA modification GTPase MnmE (453 aa).

Residues Arg28, Glu90, and Arg129 each coordinate (6S)-5-formyl-5,6,7,8-tetrahydrofolate. Positions 224 to 375 (GLRVAIIGRP…LSSALLKLCG (152 aa)) constitute a TrmE-type G domain. Residue Asn234 coordinates K(+). Residues 234–239 (NVGKSS), 253–259 (TDLPGTT), 278–281 (DTAG), and 356–358 (SAR) contribute to the GTP site. Ser238 contributes to the Mg(2+) binding site. Positions 253, 255, and 258 each coordinate K(+). Residue Thr259 coordinates Mg(2+). Lys453 provides a ligand contact to (6S)-5-formyl-5,6,7,8-tetrahydrofolate.

Belongs to the TRAFAC class TrmE-Era-EngA-EngB-Septin-like GTPase superfamily. TrmE GTPase family. As to quaternary structure, homodimer. Heterotetramer of two MnmE and two MnmG subunits. Requires K(+) as cofactor.

It localises to the cytoplasm. Exhibits a very high intrinsic GTPase hydrolysis rate. Involved in the addition of a carboxymethylaminomethyl (cmnm) group at the wobble position (U34) of certain tRNAs, forming tRNA-cmnm(5)s(2)U34. The protein is tRNA modification GTPase MnmE of Synechococcus sp. (strain RCC307).